A 116-amino-acid chain; its full sequence is Large ribosomal subunit protein bL17 (116 aa).

Belongs to the bacterial ribosomal protein bL17 family. As to quaternary structure, part of the 50S ribosomal subunit. Contacts protein L32.

The protein is Large ribosomal subunit protein bL17 of Parasynechococcus marenigrum (strain WH8102).